The sequence spans 270 residues: Sulfur carrier protein FdhD (270 aa).

Cysteine 116 functions as the Cysteine persulfide intermediate in the catalytic mechanism. Residue 253-258 (FAREGK) coordinates Mo-bis(molybdopterin guanine dinucleotide).

This sequence belongs to the FdhD family.

The protein localises to the cytoplasm. In terms of biological role, required for formate dehydrogenase (FDH) activity. Acts as a sulfur carrier protein that transfers sulfur from IscS to the molybdenum cofactor prior to its insertion into FDH. This is Sulfur carrier protein FdhD from Haemophilus influenzae (strain 86-028NP).